The following is a 325-amino-acid chain: Beta-ketoacyl-[acyl-carrier-protein] synthase III 2 (325 aa).

Residues Cys-113 and His-250 contribute to the active site. Residues 251–255 (SANLR) are ACP-binding. Asn-280 is a catalytic residue.

This sequence belongs to the thiolase-like superfamily. FabH family. As to quaternary structure, homodimer.

It is found in the cytoplasm. It carries out the reaction 3-methylbutanoyl-CoA + malonyl-[ACP] + H(+) = 5-methyl-3-oxohexanoyl-[ACP] + CO2 + CoA. It catalyses the reaction 2-methylpropanoyl-CoA + malonyl-[ACP] + H(+) = 4-methyl-3-oxopentanoyl-[ACP] + CO2 + CoA. The catalysed reaction is (2S)-2-methylbutanoyl-CoA + malonyl-[ACP] + H(+) = (4S)-4-methyl-3-oxohexanoyl-[ACP] + CO2 + CoA. The enzyme catalyses malonyl-[ACP] + acetyl-CoA + H(+) = 3-oxobutanoyl-[ACP] + CO2 + CoA. It carries out the reaction malonyl-[ACP] + propanoyl-CoA + H(+) = 3-oxopentanoyl-[ACP] + CO2 + CoA. It catalyses the reaction butanoyl-CoA + malonyl-[ACP] + H(+) = 3-oxohexanoyl-[ACP] + CO2 + CoA. The catalysed reaction is pentanoyl-CoA + malonyl-[ACP] + H(+) = 3-oxoheptanoyl-[ACP] + CO2 + CoA. The enzyme catalyses hexanoyl-CoA + malonyl-[ACP] + H(+) = 3-oxooctanoyl-[ACP] + CO2 + CoA. It carries out the reaction heptanoyl-CoA + malonyl-[ACP] + H(+) = 3-oxononanoyl-[ACP] + CO2 + CoA. It participates in lipid metabolism; fatty acid biosynthesis. Catalyzes the condensation reaction of fatty acid synthesis by the addition to an acyl acceptor of two carbons from malonyl-ACP. Catalyzes the first condensation reaction which initiates fatty acid synthesis and may therefore play a role in governing the total rate of fatty acid production. Possesses both acetoacetyl-ACP synthase and acetyl transacylase activities. Has some substrate specificity for branched chain acyl-CoA, determining the biosynthesis of branched-chain of fatty acids instead of straight-chain. In Bacillus subtilis (strain 168), this protein is Beta-ketoacyl-[acyl-carrier-protein] synthase III 2.